We begin with the raw amino-acid sequence, 457 residues long: tRNA modification GTPase MnmE (457 aa).

(6S)-5-formyl-5,6,7,8-tetrahydrofolate is bound by residues arginine 22, glutamate 83, and arginine 122. One can recognise a TrmE-type G domain in the interval 219 to 378 (GLATAIIGRP…LEEAIKTLFF (160 aa)). K(+) is bound at residue asparagine 229. Residues 229–234 (NVGKSS), 248–254 (TDIAGTT), and 273–276 (DTAG) each bind GTP. A Mg(2+)-binding site is contributed by serine 233. The K(+) site is built by threonine 248, isoleucine 250, and threonine 253. Mg(2+) is bound at residue threonine 254. Lysine 457 contributes to the (6S)-5-formyl-5,6,7,8-tetrahydrofolate binding site.

It belongs to the TRAFAC class TrmE-Era-EngA-EngB-Septin-like GTPase superfamily. TrmE GTPase family. In terms of assembly, homodimer. Heterotetramer of two MnmE and two MnmG subunits. K(+) is required as a cofactor.

The protein localises to the cytoplasm. Functionally, exhibits a very high intrinsic GTPase hydrolysis rate. Involved in the addition of a carboxymethylaminomethyl (cmnm) group at the wobble position (U34) of certain tRNAs, forming tRNA-cmnm(5)s(2)U34. The chain is tRNA modification GTPase MnmE from Listeria welshimeri serovar 6b (strain ATCC 35897 / DSM 20650 / CCUG 15529 / CIP 8149 / NCTC 11857 / SLCC 5334 / V8).